A 327-amino-acid chain; its full sequence is Small ribosomal subunit protein RACK1z (327 aa).

WD repeat units lie at residues A13–K44, G61–D91, G103–N133, G148–N180, G192–D222, E233–D262, and R293–G323.

The protein belongs to the WD repeat G protein beta family. Ribosomal protein RACK1 subfamily. In terms of assembly, homodimer and heterodimer with RACK1B or RACK1C. Interacts with NUDT7. Interacts with GB1, MEKK1, MKK4, MKK5, MPK3 and MPK6, but not with GPA1 or MPK4. Interacts with OFUT20. As to expression, widely expressed.

The protein resides in the cytoplasm. It localises to the nucleus. Major component of the RACK1 regulatory proteins that play a role in multiple signal transduction pathways. Involved in multiple hormone responses and developmental processes. MAPK cascade scaffolding protein involved in the protease IV and ArgC signaling pathway but not the flg22 pathway. The sequence is that of Small ribosomal subunit protein RACK1z from Arabidopsis thaliana (Mouse-ear cress).